Consider the following 147-residue polypeptide: Large ribosomal subunit protein uL22c (147 aa).

Belongs to the universal ribosomal protein uL22 family. Part of the 50S ribosomal subunit.

It is found in the plastid. In terms of biological role, this protein binds specifically to 23S rRNA. Functionally, the globular domain of the protein is located near the polypeptide exit tunnel on the outside of the subunit, while an extended beta-hairpin is found that lines the wall of the exit tunnel in the center of the 70S ribosome. The chain is Large ribosomal subunit protein uL22c (rpl22) from Cuscuta gronovii (Common dodder).